We begin with the raw amino-acid sequence, 218 residues long: MDKSESTSAGRNRRRRPRRGSRSAPSSADANFRVLSQQLSRLNKTLAAGRPTINHPTFVGSERCRPGYTFTSITLKPPKIDRGSYYGKRLLLPDSVTEYDKKLVSRIQIRVNPLPKFDSTVWVTVRKVPASSDLSVAAISAMFADGASPVLVYQYAASGVQANNKLLYDLSAMRADIGDMRKYAVLVYSKDDALETDELVLHVDIEHQRIPTSGVLPV.

The segment at 1-28 is disordered; that stretch reads MDKSESTSAGRNRRRRPRRGSRSAPSSA. Basic residues predominate over residues 11-21; sequence RNRRRRPRRGS.

Belongs to the cucumovirus capsid protein family.

The protein localises to the virion. Functionally, capsid protein. Probably binds RNA and plays a role in packaging. The sequence is that of Capsid protein from Cucurbita pepo (Vegetable marrow).